A 208-amino-acid polypeptide reads, in one-letter code: FMN-dependent NADH:quinone oxidoreductase 1 (208 aa).

An FMN-binding site is contributed by 17 to 19 (SVS).

This sequence belongs to the azoreductase type 1 family. Homodimer. FMN serves as cofactor.

It catalyses the reaction 2 a quinone + NADH + H(+) = 2 a 1,4-benzosemiquinone + NAD(+). The catalysed reaction is N,N-dimethyl-1,4-phenylenediamine + anthranilate + 2 NAD(+) = 2-(4-dimethylaminophenyl)diazenylbenzoate + 2 NADH + 2 H(+). Functionally, quinone reductase that provides resistance to thiol-specific stress caused by electrophilic quinones. Its function is as follows. Also exhibits azoreductase activity. Catalyzes the reductive cleavage of the azo bond in aromatic azo compounds to the corresponding amines. This Listeria innocua serovar 6a (strain ATCC BAA-680 / CLIP 11262) protein is FMN-dependent NADH:quinone oxidoreductase 1.